The chain runs to 270 residues: Large ribosomal subunit protein uL2c (270 aa).

The interval 221-245 (NPIDHPHGGGEGRAPIGRNQPKTPW) is disordered.

Belongs to the universal ribosomal protein uL2 family. As to quaternary structure, part of the 50S ribosomal subunit.

It localises to the plastid. This Cuscuta gronovii (Common dodder) protein is Large ribosomal subunit protein uL2c (rpl2).